Here is a 314-residue protein sequence, read N- to C-terminus: Transcriptional regulatory protein GlnL (314 aa).

Positions 2-118 constitute a Response regulatory domain; sequence RFFIADDDRA…EIVTVLQKVK (117 aa). D54 bears the 4-aspartylphosphate mark.

Post-translationally, phosphorylated by GlnK.

Its subcellular location is the cytoplasm. Functionally, member of the two-component regulatory system GlnL/GlnK that positively regulates the expression of the glsA-glnT operon in response to glutamine. GlnL binds the promoter region of glsA-glnT in vitro. The polypeptide is Transcriptional regulatory protein GlnL (glnL) (Bacillus subtilis (strain 168)).